A 367-amino-acid polypeptide reads, in one-letter code: Probable L-aspartate decarboxylase (367 aa).

Lysine 216 is modified (N6-(pyridoxal phosphate)lysine).

This sequence belongs to the group II decarboxylase family. MfnA subfamily. It depends on pyridoxal 5'-phosphate as a cofactor.

It catalyses the reaction L-aspartate + H(+) = beta-alanine + CO2. It participates in cofactor biosynthesis; coenzyme A biosynthesis. Its function is as follows. Catalyzes the decarboxylation of L-aspartate to produce beta-alanine. The polypeptide is Probable L-aspartate decarboxylase (Archaeoglobus fulgidus (strain ATCC 49558 / DSM 4304 / JCM 9628 / NBRC 100126 / VC-16)).